The following is a 273-amino-acid chain: Large ribosomal subunit protein uL2 (273 aa).

2 disordered regions span residues 30-50 and 221-273; these read YAPLLDTKSKTGGRNNFGRIT and RGTA…RRGK. Positions 253-273 are enriched in basic residues; it reads KGKKTRHNKRTDKFIVRRRGK.

It belongs to the universal ribosomal protein uL2 family. Part of the 50S ribosomal subunit. Forms a bridge to the 30S subunit in the 70S ribosome.

In terms of biological role, one of the primary rRNA binding proteins. Required for association of the 30S and 50S subunits to form the 70S ribosome, for tRNA binding and peptide bond formation. It has been suggested to have peptidyltransferase activity; this is somewhat controversial. Makes several contacts with the 16S rRNA in the 70S ribosome. In Pasteurella multocida (strain Pm70), this protein is Large ribosomal subunit protein uL2.